A 135-amino-acid polypeptide reads, in one-letter code: Large ribosomal subunit protein bL21 (135 aa).

Over residues T109–T128 the composition is skewed to polar residues. A disordered region spans residues T109–E135.

Belongs to the bacterial ribosomal protein bL21 family. As to quaternary structure, part of the 50S ribosomal subunit. Contacts protein L20.

Its function is as follows. This protein binds to 23S rRNA in the presence of protein L20. The polypeptide is Large ribosomal subunit protein bL21 (Synechococcus sp. (strain JA-3-3Ab) (Cyanobacteria bacterium Yellowstone A-Prime)).